We begin with the raw amino-acid sequence, 358 residues long: Alanine racemase (358 aa).

The active-site Proton acceptor; specific for D-alanine is the K35. At K35 the chain carries N6-(pyridoxal phosphate)lysine. R130 lines the substrate pocket. Y255 serves as the catalytic Proton acceptor; specific for L-alanine. A substrate-binding site is contributed by M303.

The protein belongs to the alanine racemase family. Requires pyridoxal 5'-phosphate as cofactor.

It catalyses the reaction L-alanine = D-alanine. The protein operates within amino-acid biosynthesis; D-alanine biosynthesis; D-alanine from L-alanine: step 1/1. Its function is as follows. Catalyzes the interconversion of L-alanine and D-alanine. May also act on other amino acids. This Shewanella sp. (strain ANA-3) protein is Alanine racemase (alr).